A 479-amino-acid polypeptide reads, in one-letter code: MSSSATVVPLAYQGNTSASVADWLNKGDNAWQLVAATVVGLQSVPGLVVLYGGVVKKKWAVNSAFMALYAFAAVWICWVTWAYNMSFGEKLLPIWGKARPALDQGLLVGRAALPATVHYRADGSVETAAVEPLYPMATVVYFQCVFAAITLILVAGSLLGRMSFLAWMIFVPLWLTFSYTVGAFSLWGGGFLFHWGVIDYCGGYVIHVSAGIAGFTAAYWVGPRAQKDRERFPPNNILFTLTGAGLLWMGWAGFNGGGPYAANSVASMAVLNTNICTAMSLIVWTCLDVIFFKKPSVVGAVQGMITGLVCITPAAGVVQGWAALVMGVLAGSIPWYTMMILHKRSKILQRVDDTLGVFHTHGVAGLLGGLLTGLFAEPTLCNLFLPVADSRGAFYGGAGGAQFGKQIAGGLFVVAWNVAVTSLICLAINLLVPLRMPDDKLEVGDDAVHGEEAYALWGDGEMYDVTKHGSDAAVAPVVV.

A run of 11 helical transmembrane segments spans residues 34-54, 59-79, 139-159, 164-184, 202-222, 237-257, 272-292, 297-317, 321-341, 355-375, and 407-427; these read VAAT…YGGV, WAVN…ICWV, VVYF…GSLL, FLAW…VGAF, GGYV…YWVG, ILFT…FNGG, NTNI…VIFF, VVGA…AAGV, WAAL…MMIL, LGVF…TGLF, and IAGG…ICLA.

It belongs to the ammonia transporter channel (TC 1.A.11.2) family.

Its subcellular location is the membrane. Involved in ammonium transport. This Oryza sativa subsp. japonica (Rice) protein is Ammonium transporter 3 member 2 (AMT3-2).